The sequence spans 143 residues: Large ribosomal subunit protein uL13 (143 aa).

It belongs to the universal ribosomal protein uL13 family. Part of the 50S ribosomal subunit.

This protein is one of the early assembly proteins of the 50S ribosomal subunit, although it is not seen to bind rRNA by itself. It is important during the early stages of 50S assembly. The polypeptide is Large ribosomal subunit protein uL13 (Methylacidiphilum infernorum (isolate V4) (Methylokorus infernorum (strain V4))).